We begin with the raw amino-acid sequence, 425 residues long: Enolase (425 aa).

Residue Gln-162 participates in (2R)-2-phosphoglycerate binding. The Proton donor role is filled by Glu-204. Residues Asp-241, Glu-288, and Asp-315 each contribute to the Mg(2+) site. Positions 340, 369, 370, and 391 each coordinate (2R)-2-phosphoglycerate. The active-site Proton acceptor is Lys-340.

This sequence belongs to the enolase family. Requires Mg(2+) as cofactor.

Its subcellular location is the cytoplasm. The protein resides in the secreted. It is found in the cell surface. The catalysed reaction is (2R)-2-phosphoglycerate = phosphoenolpyruvate + H2O. It functions in the pathway carbohydrate degradation; glycolysis; pyruvate from D-glyceraldehyde 3-phosphate: step 4/5. Catalyzes the reversible conversion of 2-phosphoglycerate (2-PG) into phosphoenolpyruvate (PEP). It is essential for the degradation of carbohydrates via glycolysis. This Porphyromonas gingivalis (strain ATCC 33277 / DSM 20709 / CIP 103683 / JCM 12257 / NCTC 11834 / 2561) protein is Enolase.